The sequence spans 132 residues: Small heat shock protein hspL (132 aa).

Positions 15-131 constitute a sHSP domain; that stretch reads TFTNFVSAPV…VKMSNNNKVE (117 aa).

Belongs to the small heat shock protein (HSP20) family.

This chain is Small heat shock protein hspL (hspL), found in Dictyostelium discoideum (Social amoeba).